A 194-amino-acid chain; its full sequence is MKIIDKKIEQFAQYLQRKNNLDHIQFLKIRLGMQVLAINIEKSIVVYGLAIIFHTFFYTLLTHLSYFLIRRHAHGTHANSSLLCHIQNIIFFIIFPYLIIKLDINYFVLLSMALVGLIITILYAPAATKKQPIPRRLVKRKKILSIFLYCTIVVISLVTKEPVNKLILFGVILESLTLLPIFFPKEDINHGKHF.

A run of 5 helical transmembrane segments spans residues 44 to 64 (IVVYGLAIIFHTFFYTLLTHL), 80 to 100 (SSLLCHIQNIIFFIIFPYLII), 107 to 127 (FVLLSMALVGLIITILYAPAA), 142 to 162 (KILSIFLYCTIVVISLVTKEP), and 163 to 183 (VNKLILFGVILESLTLLPIFF).

The protein belongs to the AgrB family.

It is found in the cell membrane. Functionally, essential for the production of a quorum sensing system signal molecule, the autoinducing peptide (AIP). This quorum sensing system is responsible for the regulation of the expression of virulence factor genes. Involved in the proteolytic processing of AgrD, the precursor of AIP. In Staphylococcus epidermidis, this protein is Accessory gene regulator protein B.